A 199-amino-acid polypeptide reads, in one-letter code: Recombination protein RecR (199 aa).

Residues 56 to 71 (CSICFNWSAEDPCEIC) form a C4-type zinc finger. A Toprim domain is found at 79–174 (STWCVVADVK…GLRMTRLAFG (96 aa)).

Belongs to the RecR family.

In terms of biological role, may play a role in DNA repair. It seems to be involved in an RecBC-independent recombinational process of DNA repair. It may act with RecF and RecO. The polypeptide is Recombination protein RecR (Synechococcus sp. (strain JA-3-3Ab) (Cyanobacteria bacterium Yellowstone A-Prime)).